Here is a 213-residue protein sequence, read N- to C-terminus: Orotate phosphoribosyltransferase (213 aa).

Position 26 (Lys26) interacts with 5-phospho-alpha-D-ribose 1-diphosphate. 34–35 is a binding site for orotate; it reads FF. 5-phospho-alpha-D-ribose 1-diphosphate contacts are provided by residues 72 to 73, Arg99, Lys100, Lys103, His105, and 124 to 132; these read YK and DDVITAGTA. Residues Thr128 and Arg156 each coordinate orotate.

Belongs to the purine/pyrimidine phosphoribosyltransferase family. PyrE subfamily. Homodimer. It depends on Mg(2+) as a cofactor.

It catalyses the reaction orotidine 5'-phosphate + diphosphate = orotate + 5-phospho-alpha-D-ribose 1-diphosphate. It functions in the pathway pyrimidine metabolism; UMP biosynthesis via de novo pathway; UMP from orotate: step 1/2. Functionally, catalyzes the transfer of a ribosyl phosphate group from 5-phosphoribose 1-diphosphate to orotate, leading to the formation of orotidine monophosphate (OMP). The protein is Orotate phosphoribosyltransferase of Pseudomonas paraeruginosa (strain DSM 24068 / PA7) (Pseudomonas aeruginosa (strain PA7)).